A 185-amino-acid polypeptide reads, in one-letter code: Ribosome-recycling factor (185 aa).

It belongs to the RRF family.

The protein resides in the cytoplasm. Functionally, responsible for the release of ribosomes from messenger RNA at the termination of protein biosynthesis. May increase the efficiency of translation by recycling ribosomes from one round of translation to another. This chain is Ribosome-recycling factor, found in Ehrlichia chaffeensis (strain ATCC CRL-10679 / Arkansas).